The primary structure comprises 712 residues: Eukaryotic peptide chain release factor GTP-binding subunit (712 aa).

A compositionally biased stretch (polar residues) spans 1 to 23; the sequence is MSNPQDQLSNDLANASISGDQSK. 4 disordered regions span residues 1–64, 76–115, 132–162, and 184–256; these read MSNP…QYGG, GYQQ…QQQY, PQQQ…ASLN, and TKKV…APVS. Positions 16-143 are several sort of repeats; sequence SISGDQSKQP…QQQQQQTQSQ (128 aa). Composition is skewed to low complexity over residues 24-35 and 48-64; these read QPQQQQPQQQQP and TGGY…QYGG. 2 stretches are compositionally biased toward low complexity: residues 132 to 141 and 190 to 201; these read PQQQQQQQTQ and AKPAASKEASPA. The segment at 144–282 is charged; the sequence is GMSLADFQKQ…DEVDEEVVKD (139 aa). Over residues 202–217 the composition is skewed to basic and acidic residues; that stretch reads PKDEEASAEPEAKKES. Residues 218-256 show a composition bias toward low complexity; it reads TPVPASSSPAPAAADSTPAPVKKESTPTPSVASKSAPVS. Residues 287 to 512 form the tr-type G domain; that stretch reads KDHVSIIFMG…YLDNMDTMNR (226 aa). Residues 296 to 303 are G1; the sequence is GHVDAGKS. 296-303 provides a ligand contact to GTP; the sequence is GHVDAGKS. The tract at residues 352-356 is G2; sequence GKTIE. Thr370 is modified (phosphothreonine). Residues 373–376 form a G3 region; the sequence is DAPG. GTP is bound by residues 373-377 and 435-438; these read DAPGH and NKMD. The tract at residues 435–438 is G4; that stretch reads NKMD. The interval 476–478 is G5; sequence SGY.

This sequence belongs to the TRAFAC class translation factor GTPase superfamily. Classic translation factor GTPase family. ERF3 subfamily.

It localises to the cytoplasm. Its function is as follows. Involved in translation termination. Stimulates the activity of ERF1. Binds guanine nucleotides. In Candida maltosa (Yeast), this protein is Eukaryotic peptide chain release factor GTP-binding subunit (SUP35).